Here is a 448-residue protein sequence, read N- to C-terminus: Probable glycine dehydrogenase (decarboxylating) subunit 1 (448 aa).

This sequence belongs to the GcvP family. N-terminal subunit subfamily. In terms of assembly, the glycine cleavage system is composed of four proteins: P, T, L and H. In this organism, the P 'protein' is a heterodimer of two subunits.

It catalyses the reaction N(6)-[(R)-lipoyl]-L-lysyl-[glycine-cleavage complex H protein] + glycine + H(+) = N(6)-[(R)-S(8)-aminomethyldihydrolipoyl]-L-lysyl-[glycine-cleavage complex H protein] + CO2. Functionally, the glycine cleavage system catalyzes the degradation of glycine. The P protein binds the alpha-amino group of glycine through its pyridoxal phosphate cofactor; CO(2) is released and the remaining methylamine moiety is then transferred to the lipoamide cofactor of the H protein. This Anoxybacillus flavithermus (strain DSM 21510 / WK1) protein is Probable glycine dehydrogenase (decarboxylating) subunit 1.